We begin with the raw amino-acid sequence, 545 residues long: Adenine deaminase (545 aa).

The protein belongs to the metallo-dependent hydrolases superfamily. Adenine deaminase family. Requires Mn(2+) as cofactor.

The catalysed reaction is adenine + H2O + H(+) = hypoxanthine + NH4(+). The protein is Adenine deaminase of Parabacteroides distasonis (strain ATCC 8503 / DSM 20701 / CIP 104284 / JCM 5825 / NCTC 11152).